We begin with the raw amino-acid sequence, 293 residues long: Elongation factor Ts (293 aa).

The involved in Mg(2+) ion dislocation from EF-Tu stretch occupies residues 80-83; that stretch reads TDFV.

This sequence belongs to the EF-Ts family.

The protein localises to the cytoplasm. Its function is as follows. Associates with the EF-Tu.GDP complex and induces the exchange of GDP to GTP. It remains bound to the aminoacyl-tRNA.EF-Tu.GTP complex up to the GTP hydrolysis stage on the ribosome. This is Elongation factor Ts from Burkholderia pseudomallei (strain 1106a).